The primary structure comprises 331 residues: Geranylgeranyl transferase type-2 subunit beta (331 aa).

Position 2 is an N-acetylglycine (Gly2). Thr3 is subject to Phosphothreonine. 6 PFTB repeats span residues 20–61 (LEKH…DLMG), 68–109 (REEI…TLYD), 116–157 (INKV…ALLG), 164–205 (VEKA…AITS), 212–253 (SDLL…KIIG), and 260–302 (REKL…SLLG). 190–192 (HAG) contacts geranylgeranyl diphosphate. Residues Asp238 and Cys240 each coordinate Zn(2+). 241 to 244 (YSWW) is a binding site for geranylgeranyl diphosphate. His290 contributes to the Zn(2+) binding site.

This sequence belongs to the protein prenyltransferase subunit beta family. Heterotrimer composed of RABGGTA, RABGGTB and CHM; within this trimer, RABGGTA and RABGGTB form the catalytic component B, while CHM (component A) mediates peptide substrate binding. The Rab GGTase dimer (RGGT) interacts with CHM (component A) prior to Rab protein binding; the association is stabilized by geranylgeranyl pyrophosphate (GGpp). The CHM:RGGT:Rab complex is destabilized by GGpp. Interaction of RABGGTB with prenylated PTP4A2 precludes its association with RABGGTA and inhibits enzyme activity. Interacts with CHODL. Interacts with non-phosphorylated form of RAB8A; phosphorylation of RAB8A at 'Thr-72' disrupts this interaction. Requires Zn(2+) as cofactor.

It carries out the reaction geranylgeranyl diphosphate + L-cysteinyl-[protein] = S-geranylgeranyl-L-cysteinyl-[protein] + diphosphate. With respect to regulation, the enzymatic reaction requires the aid of a Rab escort protein (also called component A). Functionally, catalyzes the transfer of a geranylgeranyl moiety from geranylgeranyl diphosphate to both cysteines of Rab proteins with the C-terminal sequence -XXCC, -XCXC and -CCXX, such as RAB1A, RAB3A, RAB5A and RAB7A. The chain is Geranylgeranyl transferase type-2 subunit beta (RABGGTB) from Bos taurus (Bovine).